The chain runs to 179 residues: uncharacterized protein (179 aa).

Residues glutamine 21–lysine 109 form the Rhodanese domain. 2 consecutive transmembrane segments (helical) span residues isoleucine 115–leucine 135 and phenylalanine 138–glycine 158.

The protein resides in the cell membrane. This is an uncharacterized protein from Synechocystis sp. (strain ATCC 27184 / PCC 6803 / Kazusa).